The sequence spans 215 residues: Transcription factor LAX PANICLE 1 (215 aa).

The interval 1 to 48 (MHDPRGFPIHPQPYHLHPTAGGLGEGRMRGGGRRRPGAKLSTDPQSVA) is disordered. The segment at 40–53 (LSTDPQSVAARERR) is basic motif; degenerate. In terms of domain architecture, bHLH spans 40–89 (LSTDPQSVAARERRHRISDRFRVLRSLVPGGSKMDTVSMLEQAIHYVKFL). The segment at 54-89 (HRISDRFRVLRSLVPGGSKMDTVSMLEQAIHYVKFL) is helix-loop-helix motif.

Belongs to the bHLH protein family. As to quaternary structure, efficient DNA binding requires dimerization with another bHLH protein. Interacts with LAX2. In terms of tissue distribution, expressed in the boundary between the shoot apical meristem (SAM) and the region of new meristem formation.

The protein localises to the nucleus. Functionally, transcription factor that seems to regulate organogenesis in postembryonic development. Involved in the regulation of shoot branching by controlling axillary meristem initiation. Functions in association with LAX2 to regulate the process of AM formation. Possesses transactivation activity in yeast. This Oryza sativa subsp. japonica (Rice) protein is Transcription factor LAX PANICLE 1.